We begin with the raw amino-acid sequence, 334 residues long: Anthranilate phosphoribosyltransferase (334 aa).

5-phospho-alpha-D-ribose 1-diphosphate is bound by residues Gly-81, 84-85 (GD), Thr-89, 91-94 (NIST), 109-117 (KHGSRSVSS), and Ala-121. Gly-81 lines the anthranilate pocket. Ser-93 is a binding site for Mg(2+). Residue Arg-167 coordinates anthranilate. Mg(2+)-binding residues include Asp-225 and Glu-226.

It belongs to the anthranilate phosphoribosyltransferase family. As to quaternary structure, homodimer. The cofactor is Mg(2+).

It catalyses the reaction N-(5-phospho-beta-D-ribosyl)anthranilate + diphosphate = 5-phospho-alpha-D-ribose 1-diphosphate + anthranilate. Its pathway is amino-acid biosynthesis; L-tryptophan biosynthesis; L-tryptophan from chorismate: step 2/5. Catalyzes the transfer of the phosphoribosyl group of 5-phosphorylribose-1-pyrophosphate (PRPP) to anthranilate to yield N-(5'-phosphoribosyl)-anthranilate (PRA). This Actinobacillus pleuropneumoniae serotype 5b (strain L20) protein is Anthranilate phosphoribosyltransferase.